The following is a 252-amino-acid chain: 3-deoxy-manno-octulosonate cytidylyltransferase (252 aa).

The protein belongs to the KdsB family.

It is found in the cytoplasm. The enzyme catalyses 3-deoxy-alpha-D-manno-oct-2-ulosonate + CTP = CMP-3-deoxy-beta-D-manno-octulosonate + diphosphate. The protein operates within nucleotide-sugar biosynthesis; CMP-3-deoxy-D-manno-octulosonate biosynthesis; CMP-3-deoxy-D-manno-octulosonate from 3-deoxy-D-manno-octulosonate and CTP: step 1/1. It functions in the pathway bacterial outer membrane biogenesis; lipopolysaccharide biosynthesis. Functionally, activates KDO (a required 8-carbon sugar) for incorporation into bacterial lipopolysaccharide in Gram-negative bacteria. The protein is 3-deoxy-manno-octulosonate cytidylyltransferase of Vibrio cholerae serotype O1 (strain ATCC 39315 / El Tor Inaba N16961).